Reading from the N-terminus, the 543-residue chain is MPDISLSIPRRRLPRLRPLAAAVLGAVLLHGQAWAAQPVEKPQPVPAQAGNEPGLTQGLKETGNYTVTTAPAEPLHLDPPKLPDLSGYTAAAVEAKIVRKPGGRASVQRMVQQQPLKEFTGGSNRLAEWVKRQRQMPQAIFIEGGYVNLAQLAGKLPASALEQVEPGVFVARLPIVVSQGATLDIDKQVKELRLSQERGAFLVNDGMLFVRDSKVTGWSESKKEPAWFKTPNEFRPFLISWGGAEVYLSNSTFTSFGYNASKAYGISISQYSPGMDKQMKRPRPKGWVIDSTIVDSWYGFYCYEADDLVVKGNTYRDNIVYGIDPHDRSHRLIIADNTVHGTRKKHGIIVSREVNDSFIFNNRSYENKLSGIVLDRNSEGNLVAYNEVYRNHSDGITLYESGDNLLWGNQVLANRRHGIRVRNSVNIRLYENLAAGNQLIGVYGHIKDLTNTDRNIALDPFDTKVSLIVVGGKLAGNGSGPLSVDSPLSLELYRVAMLAPTKSSGISLPGVLGEKQDQILDLLVRQDKAVLIDPVESQAELQD.

The N-terminal stretch at 1–35 is a signal peptide; it reads MPDISLSIPRRRLPRLRPLAAAVLGAVLLHGQAWA. 7 PbH1 repeats span residues 243 to 270, 283 to 304, 305 to 327, 329 to 352, 354 to 376, 378 to 400, and 401 to 423; these read GAEVYLSNSTFTSFGYNASKAYGISISQ, RPKGWVIDSTIVDSWYGFYCYE, ADDLVVKGNTYRDNIVYGIDPHD, SHRLIIADNTVHGTRKKHGIIVSR, VNDSFIFNNRSYENKLSGIVLDR, SEGNLVAYNEVYRNHSDGITLYE, and SGDNLLWGNQVLANRRHGIRVRN. The active-site Proton acceptor is the H326.

It belongs to the D-mannuronate C5-epimerase family.

The protein localises to the periplasm. The catalysed reaction is [(1-&gt;4)-beta-D-mannuronosyl](n) = [alginate](n). Its pathway is glycan biosynthesis; alginate biosynthesis. Inhibited by the presence of acetyl groups on the substrate. Functionally, catalyzes the epimerization of beta-D-mannuronate to alpha-L-guluronate during the synthesis of the linear polysaccharide alginate. In addition, is part of a periplasmic protein complex that protects alginate from degradation by AlgL by channeling the newly formed alginate polymer through a scaffold that transfers the alginate polymer through the periplasmic space to the outer membrane secretin AlgE. The protein is Mannuronan C5-epimerase of Pseudomonas aeruginosa (strain ATCC 15692 / DSM 22644 / CIP 104116 / JCM 14847 / LMG 12228 / 1C / PRS 101 / PAO1).